The sequence spans 206 residues: Small ribosomal subunit protein uS4 (206 aa).

The S4 RNA-binding domain occupies 96-157 (GRLDNVVYRM…KAKKQSRVRA (62 aa)).

Belongs to the universal ribosomal protein uS4 family. Part of the 30S ribosomal subunit. Contacts protein S5. The interaction surface between S4 and S5 is involved in control of translational fidelity.

Its function is as follows. One of the primary rRNA binding proteins, it binds directly to 16S rRNA where it nucleates assembly of the body of the 30S subunit. With S5 and S12 plays an important role in translational accuracy. The sequence is that of Small ribosomal subunit protein uS4 from Sodalis glossinidius (strain morsitans).